Reading from the N-terminus, the 199-residue chain is dTTP/UTP pyrophosphatase (199 aa).

The active-site Proton acceptor is Asp79.

The protein belongs to the Maf family. YhdE subfamily. It depends on a divalent metal cation as a cofactor.

The protein localises to the cytoplasm. It carries out the reaction dTTP + H2O = dTMP + diphosphate + H(+). The catalysed reaction is UTP + H2O = UMP + diphosphate + H(+). Functionally, nucleoside triphosphate pyrophosphatase that hydrolyzes dTTP and UTP. May have a dual role in cell division arrest and in preventing the incorporation of modified nucleotides into cellular nucleic acids. The polypeptide is dTTP/UTP pyrophosphatase (Porphyromonas gingivalis (strain ATCC 33277 / DSM 20709 / CIP 103683 / JCM 12257 / NCTC 11834 / 2561)).